Consider the following 537-residue polypeptide: Ribonuclease III domain-containing protein RNC1, chloroplastic (537 aa).

The transit peptide at 1–51 (MELCSSSPSSSLLRICSSSAPEISFSSSISQFPSKTQSILTKSRFQNLRIC) directs the protein to the chloroplast. RNase III domains are found at residues 141–283 (LLEV…LCFG) and 415–515 (EHPR…TIYG).

Interacts with RNA. Part of large ribonucleo-protein particles that contain CAF1 and/or CAF2.

It localises to the plastid. Its subcellular location is the chloroplast. Functionally, binds specific group II introns in chloroplasts and facilitates their splicing. Acts on both subgroup IIA and subgroup IIB introns. The substrates of the subgroup II also require the CRM domain proteins CAF1 or CAF2. Binds both single-stranded and double-stranded RNA non-specifically, but lacks endonuclease activity. Required for plastid ribosome biogenesis. This chain is Ribonuclease III domain-containing protein RNC1, chloroplastic, found in Arabidopsis thaliana (Mouse-ear cress).